A 499-amino-acid polypeptide reads, in one-letter code: Na(+)/H(+) antiporter NhaB (499 aa).

12 helical membrane-spanning segments follow: residues 38–58 (VSPFLAGWALIIEFIFTLAMA), 62–82 (YPLQPGGLLAIQAVLLGLTSA), 89–109 (VLANFKVILLLMFMVAGIYFM), 128–148 (LLLSLLFSFVAAVLSAFLDAL), 149–169 (TVTAVLIAVAVGFYAVYHRFA), 204–224 (LIMHGAVGTALGGVATLVGEP), 242–262 (LVMAPISVPALIGGLLTCAIL), 310–330 (VLVFALALHLAEVGLIGLLII), 349–369 (FEEALPFTALLVVFFAVVAVI), 393–413 (MFFVANGVLSMISDNVFVATV), 449–469 (ATPNGQAAFLFLLTSALAPLI), and 478–498 (IMALPYTIVLGAVGLGSVILF).

It belongs to the NhaB Na(+)/H(+) (TC 2.A.34) antiporter family.

It localises to the cell inner membrane. The catalysed reaction is 2 Na(+)(in) + 3 H(+)(out) = 2 Na(+)(out) + 3 H(+)(in). In terms of biological role, na(+)/H(+) antiporter that extrudes sodium in exchange for external protons. The protein is Na(+)/H(+) antiporter NhaB of Saccharophagus degradans (strain 2-40 / ATCC 43961 / DSM 17024).